We begin with the raw amino-acid sequence, 389 residues long: tRNA(Met) cytidine acetate ligase (389 aa).

ATP-binding positions include 8–21, Gly97, Asn153, and Arg176; that span reads IAEF…HEYL.

The protein belongs to the TmcAL family.

It localises to the cytoplasm. It catalyses the reaction cytidine(34) in elongator tRNA(Met) + acetate + ATP = N(4)-acetylcytidine(34) in elongator tRNA(Met) + AMP + diphosphate. Its function is as follows. Catalyzes the formation of N(4)-acetylcytidine (ac(4)C) at the wobble position of elongator tRNA(Met), using acetate and ATP as substrates. First activates an acetate ion to form acetyladenylate (Ac-AMP) and then transfers the acetyl group to tRNA to form ac(4)C34. The sequence is that of tRNA(Met) cytidine acetate ligase from Lactococcus lactis subsp. lactis (strain IL1403) (Streptococcus lactis).